We begin with the raw amino-acid sequence, 317 residues long: Acetyl-coenzyme A carboxylase carboxyl transferase subunit alpha (317 aa).

The CoA carboxyltransferase C-terminal domain maps to R39 to E293.

The protein belongs to the AccA family. In terms of assembly, acetyl-CoA carboxylase is a heterohexamer composed of biotin carboxyl carrier protein (AccB), biotin carboxylase (AccC) and two subunits each of ACCase subunit alpha (AccA) and ACCase subunit beta (AccD).

The protein localises to the cytoplasm. It carries out the reaction N(6)-carboxybiotinyl-L-lysyl-[protein] + acetyl-CoA = N(6)-biotinyl-L-lysyl-[protein] + malonyl-CoA. It functions in the pathway lipid metabolism; malonyl-CoA biosynthesis; malonyl-CoA from acetyl-CoA: step 1/1. Component of the acetyl coenzyme A carboxylase (ACC) complex. First, biotin carboxylase catalyzes the carboxylation of biotin on its carrier protein (BCCP) and then the CO(2) group is transferred by the carboxyltransferase to acetyl-CoA to form malonyl-CoA. The polypeptide is Acetyl-coenzyme A carboxylase carboxyl transferase subunit alpha (Neisseria gonorrhoeae (strain NCCP11945)).